A 540-amino-acid polypeptide reads, in one-letter code: Phenylalanine--tRNA ligase beta subunit (540 aa).

The region spanning 266 to 342 (LRPEKRTVSV…IAYGYDKIET (77 aa)) is the B5 domain. Residues D320, D326, E329, and D330 each coordinate Mg(2+).

This sequence belongs to the phenylalanyl-tRNA synthetase beta subunit family. Type 2 subfamily. As to quaternary structure, tetramer of two alpha and two beta subunits. It depends on Mg(2+) as a cofactor.

The protein resides in the cytoplasm. The catalysed reaction is tRNA(Phe) + L-phenylalanine + ATP = L-phenylalanyl-tRNA(Phe) + AMP + diphosphate + H(+). In Methanocorpusculum labreanum (strain ATCC 43576 / DSM 4855 / Z), this protein is Phenylalanine--tRNA ligase beta subunit.